A 187-amino-acid chain; its full sequence is uncharacterized protein (187 aa).

Positions 139–168 are enriched in basic and acidic residues; sequence ESKDRKALKNAARKAEKNAHEESSYFRVDD. The disordered stretch occupies residues 139–172; it reads ESKDRKALKNAARKAEKNAHEESSYFRVDDPEPE.

This is an uncharacterized protein from Caenorhabditis elegans.